The primary structure comprises 235 residues: Phosphate-specific transport system accessory protein PhoU homolog 2 (235 aa).

It belongs to the PhoU family. In terms of assembly, homodimer.

It is found in the cytoplasm. Its function is as follows. Plays a role in the regulation of phosphate uptake. The chain is Phosphate-specific transport system accessory protein PhoU homolog 2 (phoU2) from Thermotoga maritima (strain ATCC 43589 / DSM 3109 / JCM 10099 / NBRC 100826 / MSB8).